The sequence spans 417 residues: Tyrosine--tRNA ligase (417 aa).

Tyr34 contributes to the L-tyrosine binding site. The short motif at 39–48 (PTGDSMHIGH) is the 'HIGH' region element. Residues Tyr165 and Gln169 each contribute to the L-tyrosine site. The 'KMSKS' region signature appears at 227-231 (KFGKS). Lys230 serves as a coordination point for ATP. Positions 349–417 (ENIVLWLVDT…KKKYFLARVK (69 aa)) constitute an S4 RNA-binding domain.

This sequence belongs to the class-I aminoacyl-tRNA synthetase family. TyrS type 1 subfamily. In terms of assembly, homodimer.

Its subcellular location is the cytoplasm. It catalyses the reaction tRNA(Tyr) + L-tyrosine + ATP = L-tyrosyl-tRNA(Tyr) + AMP + diphosphate + H(+). In terms of biological role, catalyzes the attachment of tyrosine to tRNA(Tyr) in a two-step reaction: tyrosine is first activated by ATP to form Tyr-AMP and then transferred to the acceptor end of tRNA(Tyr). The chain is Tyrosine--tRNA ligase from Pediococcus pentosaceus (strain ATCC 25745 / CCUG 21536 / LMG 10740 / 183-1w).